The primary structure comprises 392 residues: Protein O-glucosyltransferase 1 (392 aa).

A signal peptide spans 1-23 (MERRAGSRLRAWMLLLLLCPVQG). 4 cysteine pairs are disulfide-bonded: cysteine 49-cysteine 56, cysteine 54-cysteine 357, cysteine 102-cysteine 108, and cysteine 263-cysteine 286. Asparagine 53 carries N-linked (GlcNAc...) asparagine glycosylation. Residues 103 to 107 (MFPSR) are interaction with the consensus sequence C-X-S-X-[PA]-C in peptide substrates. Residue aspartate 133 is the Proton donor/acceptor of the active site. The interaction with the consensus sequence C-X-S-X-[PA]-C in peptide substrates stretch occupies residues 172–178 (AVWPLYP). Tyrosine 177 contributes to the UDP-alpha-D-glucose binding site. Asparagine 204 is a glycosylation site (N-linked (GlcNAc...) asparagine). Residues serine 212, arginine 218, and 274-279 (VAASFR) contribute to the UDP-alpha-D-glucose site. Asparagine 373 is a glycosylation site (N-linked (GlcNAc...) asparagine). Residues 389-392 (KTEL) carry the Prevents secretion from ER motif.

It belongs to the glycosyltransferase 90 family. In terms of tissue distribution, widely expressed in newborn and adult tissues (at protein level).

Its subcellular location is the endoplasmic reticulum lumen. It catalyses the reaction L-seryl-[EGF-like domain protein] + UDP-alpha-D-xylose = 3-O-(beta-D-xylosyl)-L-seryl-[EGF-like domain protein] + UDP + H(+). It carries out the reaction L-seryl-[EGF-like domain protein] + UDP-alpha-D-glucose = 3-O-(beta-D-glucosyl)-L-seryl-[EGF-like domain protein] + UDP + H(+). It participates in protein modification; protein glycosylation. Its function is as follows. Dual specificity glycosyltransferase that catalyzes the transfer of glucose and xylose from UDP-glucose and UDP-xylose, respectively, to a serine residue found in the consensus sequence of C-X-S-X-P-C. Specifically targets extracellular EGF repeats of protein such as CRB2, F7, F9 and NOTCH2. Acts as a positive regulator of Notch signaling by mediating O-glucosylation of Notch, leading to regulate muscle development. Notch glucosylation does not affect Notch ligand binding. Required during early development to promote gastrulation: acts by mediating O-glucosylation of CRB2, which is required for CRB2 localization to the cell membrane. The polypeptide is Protein O-glucosyltransferase 1 (Mus musculus (Mouse)).